A 167-amino-acid chain; its full sequence is Ribosome maturation factor RimM (167 aa).

A PRC barrel domain is found at lysine 93 to leucine 165.

Belongs to the RimM family. In terms of assembly, binds ribosomal protein uS19.

It is found in the cytoplasm. An accessory protein needed during the final step in the assembly of 30S ribosomal subunit, possibly for assembly of the head region. Essential for efficient processing of 16S rRNA. May be needed both before and after RbfA during the maturation of 16S rRNA. It has affinity for free ribosomal 30S subunits but not for 70S ribosomes. The chain is Ribosome maturation factor RimM from Dehalococcoides mccartyi (strain ATCC BAA-2266 / KCTC 15142 / 195) (Dehalococcoides ethenogenes (strain 195)).